The following is a 447-amino-acid chain: Divalent metal cation transporter MntH (447 aa).

Helical transmembrane passes span Ala-26–Asp-48, Thr-65–Ala-85, Gly-108–Ile-128, Ile-140–Met-160, Ala-169–Ser-189, Met-212–Gly-232, Leu-264–Gly-284, Ile-304–Ser-324, Val-359–Ile-379, Leu-383–Ile-403, and Thr-426–Ile-446.

Belongs to the NRAMP family.

Its subcellular location is the cell membrane. In terms of biological role, h(+)-stimulated, divalent metal cation uptake system. This Pediococcus pentosaceus (strain ATCC 25745 / CCUG 21536 / LMG 10740 / 183-1w) protein is Divalent metal cation transporter MntH.